Here is a 489-residue protein sequence, read N- to C-terminus: Adenosylhomocysteinase (489 aa).

3 residues coordinate substrate: Thr68, Asp151, and Glu213. 214–216 (TTT) lines the NAD(+) pocket. Substrate is bound by residues Lys243 and Asp247. NAD(+)-binding positions include Asn248, 277-282 (GYGDVG), Glu300, Asn335, 356-358 (IGH), and Asn403.

This sequence belongs to the adenosylhomocysteinase family. NAD(+) serves as cofactor.

The protein resides in the cytoplasm. It carries out the reaction S-adenosyl-L-homocysteine + H2O = L-homocysteine + adenosine. The protein operates within amino-acid biosynthesis; L-homocysteine biosynthesis; L-homocysteine from S-adenosyl-L-homocysteine: step 1/1. Functionally, may play a key role in the regulation of the intracellular concentration of adenosylhomocysteine. In Mycobacterium sp. (strain JLS), this protein is Adenosylhomocysteinase.